A 364-amino-acid chain; its full sequence is Aminomethyltransferase (364 aa).

It belongs to the GcvT family. As to quaternary structure, the glycine cleavage system is composed of four proteins: P, T, L and H.

The catalysed reaction is N(6)-[(R)-S(8)-aminomethyldihydrolipoyl]-L-lysyl-[protein] + (6S)-5,6,7,8-tetrahydrofolate = N(6)-[(R)-dihydrolipoyl]-L-lysyl-[protein] + (6R)-5,10-methylene-5,6,7,8-tetrahydrofolate + NH4(+). The glycine cleavage system catalyzes the degradation of glycine. This chain is Aminomethyltransferase, found in Escherichia coli (strain SMS-3-5 / SECEC).